Reading from the N-terminus, the 613-residue chain is Carotenoid dioxygenase (613 aa).

Residues 1 to 25 (MSPHEVIGTVPKNSTTFRTQADEHD) form a disordered region. Fe(2+)-binding residues include His261, His313, His383, and His595.

Belongs to the carotenoid oxygenase family. The cofactor is Fe(2+).

It localises to the cytoplasm. The protein resides in the cytosol. It carries out the reaction torulene + O2 = 4'-apo-beta-carotenal + 3-methyl-2-butenal. Its pathway is carotenoid biosynthesis. In terms of biological role, torulene dioxygenase; part of pathway that mediates the biosynthesis of neurosporaxanthin, a carboxylic apocarotenoid acting as an essential protective pigments and leading to orange pigmentation. Cao-2 mediates the cleavage of torulene into beta-apo-4'-carotenal, the aldehyde corresponding to the acidic neurosporaxanthin. Is not able to use gamma-carotene (that it is not desaturated at the C4'-C5' bond) as substrate, which suggests a high specificity of cao-2 in cleaving the C4'-C5' double bond. Neurosporaxanthin is synthesized from geranyl-geranyl pyrophosphate (GGPP) through several enzymatic activities. Phytoene synthase activity performed by the bifunctional enzyme al-2 first produces phytoene from geranyl-geranyl pyrophosphate (GGPP). The phytoene dehydrogenase al-1 then introduces 5 desaturations to lead to 3,4-didehydrolycopene via the intermediates phytofluene, zeta-carotene, neurosporene and lycopene. Al-2 cyclase activity then converts 3,4-didehydrolycopene into torulene. Al-2 can also convet lycopene into gamma-carotene which in turn is converted to beta-carotene by an additional al-2 cyclization reaction. Torulene is the substrate of the dioxidase cao-2 that breaks the molecule, removing five carbon atoms to yield beta-apo-4'-carotenal, whereas the aldehyde dehydrogenase ylo-1 mediates the last step by converting beta-apo-4'-carotenal into neurosporaxanthin. The polypeptide is Carotenoid dioxygenase (Neurospora crassa (strain ATCC 24698 / 74-OR23-1A / CBS 708.71 / DSM 1257 / FGSC 987)).